The primary structure comprises 158 residues: Cyclic pyranopterin monophosphate synthase (158 aa).

Substrate is bound by residues 75–77 (LCH) and 113–114 (ME). D128 is an active-site residue.

This sequence belongs to the MoaC family. As to quaternary structure, homohexamer; trimer of dimers.

It carries out the reaction (8S)-3',8-cyclo-7,8-dihydroguanosine 5'-triphosphate = cyclic pyranopterin phosphate + diphosphate. It functions in the pathway cofactor biosynthesis; molybdopterin biosynthesis. Functionally, catalyzes the conversion of (8S)-3',8-cyclo-7,8-dihydroguanosine 5'-triphosphate to cyclic pyranopterin monophosphate (cPMP). The sequence is that of Cyclic pyranopterin monophosphate synthase from Roseiflexus sp. (strain RS-1).